The following is a 310-amino-acid chain: 4-hydroxythreonine-4-phosphate dehydrogenase (310 aa).

T129 is a binding site for substrate. Positions 158, 202, and 250 each coordinate a divalent metal cation. Positions 258, 267, and 276 each coordinate substrate.

It belongs to the PdxA family. In terms of assembly, homodimer. It depends on a divalent metal cation as a cofactor.

It localises to the cytoplasm. The catalysed reaction is 4-(phosphooxy)-L-threonine + NAD(+) = 3-amino-2-oxopropyl phosphate + CO2 + NADH. Its pathway is cofactor biosynthesis; pyridoxine 5'-phosphate biosynthesis; pyridoxine 5'-phosphate from D-erythrose 4-phosphate: step 4/5. Its function is as follows. Catalyzes the NAD(P)-dependent oxidation of 4-(phosphooxy)-L-threonine (HTP) into 2-amino-3-oxo-4-(phosphooxy)butyric acid which spontaneously decarboxylates to form 3-amino-2-oxopropyl phosphate (AHAP). This chain is 4-hydroxythreonine-4-phosphate dehydrogenase, found in Hydrogenobaculum sp. (strain Y04AAS1).